Reading from the N-terminus, the 493-residue chain is GTPase Der (493 aa).

In terms of domain architecture, EngA-type G 1 spans 3–166 (PVIALVGRPN…EALGIFPKDN (164 aa)). GTP contacts are provided by residues 9 to 16 (GRPNVGKS), 56 to 60 (DTGGI), and 118 to 121 (NKVD). The disordered stretch occupies residues 166 to 195 (NAEEEGEGEPASEEVAEGEEPTRIPGPSEK). Positions 167–184 (AEEEGEGEPASEEVAEGE) are enriched in acidic residues. Residues 198–371 (IKIAIIGRPN…SVQESFRSAV (174 aa)) enclose the EngA-type G 2 domain. Residues 204–211 (GRPNVGKS), 251–255 (DTAGV), and 316–319 (NKWD) contribute to the GTP site. The region spanning 372 to 456 (TRWPTSRLTS…PIRIEYKGGE (85 aa)) is the KH-like domain. The span at 454-463 (GGENPYEGKK) shows a compositional bias: basic and acidic residues. The segment at 454-493 (GGENPYEGKKNSLTARQVNKKRRLMSHHKKAEKKKKDKRR) is disordered. Residues 471–493 (VNKKRRLMSHHKKAEKKKKDKRR) are compositionally biased toward basic residues.

The protein belongs to the TRAFAC class TrmE-Era-EngA-EngB-Septin-like GTPase superfamily. EngA (Der) GTPase family. As to quaternary structure, associates with the 50S ribosomal subunit.

Its function is as follows. GTPase that plays an essential role in the late steps of ribosome biogenesis. The polypeptide is GTPase Der (Pseudomonas aeruginosa (strain UCBPP-PA14)).